We begin with the raw amino-acid sequence, 102 residues long: Integration host factor subunit alpha (102 aa).

This sequence belongs to the bacterial histone-like protein family. Heterodimer of an alpha and a beta chain.

This protein is one of the two subunits of integration host factor, a specific DNA-binding protein that functions in genetic recombination as well as in transcriptional and translational control. In Albidiferax ferrireducens (strain ATCC BAA-621 / DSM 15236 / T118) (Rhodoferax ferrireducens), this protein is Integration host factor subunit alpha.